The following is a 37-amino-acid chain: Large ribosomal subunit protein bL36 (37 aa).

Belongs to the bacterial ribosomal protein bL36 family.

In Tropheryma whipplei (strain Twist) (Whipple's bacillus), this protein is Large ribosomal subunit protein bL36.